A 669-amino-acid polypeptide reads, in one-letter code: Zinc finger MYM-type protein 5 (669 aa).

Residues K88, K91, K134, K149, K166, and K225 each participate in a glycyl lysine isopeptide (Lys-Gly) (interchain with G-Cter in SUMO2) cross-link. 4 consecutive MYM-type zinc fingers follow at residues 265–299 (HLFC…KKAN), 311–351 (QEFY…RHEV), 358–393 (HKLC…KSTG), and 404–431 (KRFC…ASEN). Glycyl lysine isopeptide (Lys-Gly) (interchain with G-Cter in SUMO2) cross-links involve residues K443, K455, K462, and K552.

In terms of assembly, interacts (via N-terminal 120 amino acid region) with ETV5 (via C-terminal).

It localises to the nucleus. Functions as a transcriptional regulator. This is Zinc finger MYM-type protein 5 (ZMYM5) from Homo sapiens (Human).